Here is a 368-residue protein sequence, read N- to C-terminus: Phosphoribosylformylglycinamidine cyclo-ligase (368 aa).

Belongs to the AIR synthase family.

The protein resides in the cytoplasm. The catalysed reaction is 2-formamido-N(1)-(5-O-phospho-beta-D-ribosyl)acetamidine + ATP = 5-amino-1-(5-phospho-beta-D-ribosyl)imidazole + ADP + phosphate + H(+). It participates in purine metabolism; IMP biosynthesis via de novo pathway; 5-amino-1-(5-phospho-D-ribosyl)imidazole from N(2)-formyl-N(1)-(5-phospho-D-ribosyl)glycinamide: step 2/2. This Chelativorans sp. (strain BNC1) protein is Phosphoribosylformylglycinamidine cyclo-ligase.